Here is a 132-residue protein sequence, read N- to C-terminus: Small ribosomal subunit protein uS8 (132 aa).

The protein belongs to the universal ribosomal protein uS8 family. Part of the 30S ribosomal subunit. Contacts proteins S5 and S12.

Its function is as follows. One of the primary rRNA binding proteins, it binds directly to 16S rRNA central domain where it helps coordinate assembly of the platform of the 30S subunit. The chain is Small ribosomal subunit protein uS8 from Caulobacter vibrioides (strain ATCC 19089 / CIP 103742 / CB 15) (Caulobacter crescentus).